Here is a 508-residue protein sequence, read N- to C-terminus: Pancreatic alpha-amylase 2a5 (508 aa).

Residues 1–15 (MKFVLLLSLIGFCWA) form the signal peptide. The residue at position 16 (Gln-16) is a Pyrrolidone carboxylic acid. 3 disulfide bridges follow: Cys-43/Cys-101, Cys-85/Cys-130, and Cys-156/Cys-172. Residues Asn-115, Arg-170, and Asp-179 each coordinate Ca(2+). Arg-207 contacts chloride. Catalysis depends on Asp-209, which acts as the Nucleophile. Position 213 (His-213) interacts with Ca(2+). Glu-245 acts as the Proton donor in catalysis. The chloride site is built by Asn-310 and Arg-349. Disulfide bonds link Cys-390–Cys-396 and Cys-462–Cys-474.

Belongs to the glycosyl hydrolase 13 family. As to quaternary structure, monomer. The cofactor is Ca(2+). It depends on chloride as a cofactor.

The protein localises to the secreted. It is found in the extracellular space. It catalyses the reaction Endohydrolysis of (1-&gt;4)-alpha-D-glucosidic linkages in polysaccharides containing three or more (1-&gt;4)-alpha-linked D-glucose units.. This chain is Pancreatic alpha-amylase 2a5, found in Mus musculus (Mouse).